The chain runs to 232 residues: Small ribosomal subunit protein uS3 (232 aa).

The 69-residue stretch at Ile39 to Arg107 folds into the KH type-2 domain. Residues Gly211–Lys232 are disordered. A compositionally biased stretch (basic and acidic residues) spans Gln213–Lys223.

Belongs to the universal ribosomal protein uS3 family. In terms of assembly, part of the 30S ribosomal subunit. Forms a tight complex with proteins S10 and S14.

In terms of biological role, binds the lower part of the 30S subunit head. Binds mRNA in the 70S ribosome, positioning it for translation. This Campylobacter concisus (strain 13826) protein is Small ribosomal subunit protein uS3.